The chain runs to 598 residues: Aspartate--tRNA(Asp/Asn) ligase (598 aa).

Position 177 (glutamate 177) interacts with L-aspartate. Residues 201 to 204 (QLFK) form an aspartate region. Arginine 223 serves as a coordination point for L-aspartate. ATP-binding positions include 223–225 (RDE) and glutamine 232. Position 456 (histidine 456) interacts with L-aspartate. Glutamate 493 provides a ligand contact to ATP. An L-aspartate-binding site is contributed by arginine 500. Residue 545–548 (GLDR) participates in ATP binding.

Belongs to the class-II aminoacyl-tRNA synthetase family. Type 1 subfamily. As to quaternary structure, homodimer.

The protein resides in the cytoplasm. It catalyses the reaction tRNA(Asx) + L-aspartate + ATP = L-aspartyl-tRNA(Asx) + AMP + diphosphate. Aspartyl-tRNA synthetase with relaxed tRNA specificity since it is able to aspartylate not only its cognate tRNA(Asp) but also tRNA(Asn). Reaction proceeds in two steps: L-aspartate is first activated by ATP to form Asp-AMP and then transferred to the acceptor end of tRNA(Asp/Asn). This is Aspartate--tRNA(Asp/Asn) ligase from Prochlorococcus marinus (strain AS9601).